A 353-amino-acid chain; its full sequence is WAT1-related protein At3g28100 (353 aa).

The next 10 membrane-spanning stretches (helical) occupy residues 12–32, 43–63, 81–101, 105–125, 137–157, 187–207, 219–239, 252–272, 283–303, and 308–328; these read AVFLTAMLATETGVVGISTLF, YAFLGYSYLLASLLLLPSLFF, IGLLGLLGSMYVITGYIGIEY, TLASAISNITPALTFILAIIF, SVAKVMGTILSLIGALVVVLY, WLIGGALLTIRDIFVSVSFIL, FTVSFLYIVSVSIVTSMIGLV, FDITLITIVTMAIITSVYYVI, LYLAIFKPLSILIAVVMSAVF, and LYLGCLIGGLLITLGFYAVMW. Positions 27-155 constitute an EamA domain; sequence GISTLFKVAT…LSLIGALVVV (129 aa).

This sequence belongs to the drug/metabolite transporter (DMT) superfamily. Plant drug/metabolite exporter (P-DME) (TC 2.A.7.4) family.

It is found in the membrane. This Arabidopsis thaliana (Mouse-ear cress) protein is WAT1-related protein At3g28100.